A 115-amino-acid chain; its full sequence is Holo-[acyl-carrier-protein] synthase (115 aa).

2 residues coordinate Mg(2+): Asp-8 and Glu-50.

Belongs to the P-Pant transferase superfamily. AcpS family. Mg(2+) serves as cofactor.

It localises to the cytoplasm. The enzyme catalyses apo-[ACP] + CoA = holo-[ACP] + adenosine 3',5'-bisphosphate + H(+). In terms of biological role, transfers the 4'-phosphopantetheine moiety from coenzyme A to a Ser of acyl-carrier-protein. The protein is Holo-[acyl-carrier-protein] synthase of Arthrobacter sp. (strain FB24).